The sequence spans 332 residues: UPF0194 membrane protein YbhG (332 aa).

The N-terminal stretch at 1-16 is a signal peptide; sequence MMKKPVVIGLAVVVLA. Residues 108–209 adopt a coiled-coil conformation; the sequence is EEIAQAAAAV…LNLQDSTLIA (102 aa).

It belongs to the UPF0194 family.

Its subcellular location is the periplasm. This chain is UPF0194 membrane protein YbhG, found in Shigella boydii serotype 4 (strain Sb227).